Consider the following 338-residue polypeptide: Phenylalanine--tRNA ligase alpha subunit (338 aa).

A Mg(2+)-binding site is contributed by glutamate 252.

This sequence belongs to the class-II aminoacyl-tRNA synthetase family. Phe-tRNA synthetase alpha subunit type 1 subfamily. In terms of assembly, tetramer of two alpha and two beta subunits. It depends on Mg(2+) as a cofactor.

The protein resides in the cytoplasm. The catalysed reaction is tRNA(Phe) + L-phenylalanine + ATP = L-phenylalanyl-tRNA(Phe) + AMP + diphosphate + H(+). The protein is Phenylalanine--tRNA ligase alpha subunit of Pseudomonas entomophila (strain L48).